Consider the following 72-residue polypeptide: Translation initiation factor IF-1 (72 aa).

One can recognise an S1-like domain in the interval 1 to 72; that stretch reads MAKEETIQMQ…SRARITFRAK (72 aa).

It belongs to the IF-1 family. In terms of assembly, component of the 30S ribosomal translation pre-initiation complex which assembles on the 30S ribosome in the order IF-2 and IF-3, IF-1 and N-formylmethionyl-tRNA(fMet); mRNA recruitment can occur at any time during PIC assembly.

The protein localises to the cytoplasm. In terms of biological role, one of the essential components for the initiation of protein synthesis. Stabilizes the binding of IF-2 and IF-3 on the 30S subunit to which N-formylmethionyl-tRNA(fMet) subsequently binds. Helps modulate mRNA selection, yielding the 30S pre-initiation complex (PIC). Upon addition of the 50S ribosomal subunit IF-1, IF-2 and IF-3 are released leaving the mature 70S translation initiation complex. This is Translation initiation factor IF-1 from Nitrosospira multiformis (strain ATCC 25196 / NCIMB 11849 / C 71).